The primary structure comprises 191 residues: Glycerol-3-phosphate acyltransferase (191 aa).

The next 5 membrane-spanning stretches (helical) occupy residues 5-25 (IVFV…ITKI), 50-70 (CIAA…VYIA), 78-98 (SFHM…PVWL), 112-132 (ILIA…LAVF), and 153-173 (SFFF…LIFF).

Belongs to the PlsY family. As to quaternary structure, probably interacts with PlsX.

It is found in the cell membrane. It carries out the reaction an acyl phosphate + sn-glycerol 3-phosphate = a 1-acyl-sn-glycero-3-phosphate + phosphate. It functions in the pathway lipid metabolism; phospholipid metabolism. In terms of biological role, catalyzes the transfer of an acyl group from acyl-phosphate (acyl-PO(4)) to glycerol-3-phosphate (G3P) to form lysophosphatidic acid (LPA). This enzyme utilizes acyl-phosphate as fatty acyl donor, but not acyl-CoA or acyl-ACP. In Wolbachia sp. subsp. Brugia malayi (strain TRS), this protein is Glycerol-3-phosphate acyltransferase.